The chain runs to 166 residues: Large ribosomal subunit protein uL10 (166 aa).

The protein belongs to the universal ribosomal protein uL10 family. Part of the ribosomal stalk of the 50S ribosomal subunit. The N-terminus interacts with L11 and the large rRNA to form the base of the stalk. The C-terminus forms an elongated spine to which L12 dimers bind in a sequential fashion forming a multimeric L10(L12)X complex.

Its function is as follows. Forms part of the ribosomal stalk, playing a central role in the interaction of the ribosome with GTP-bound translation factors. The polypeptide is Large ribosomal subunit protein uL10 (Bacillus pumilus (strain SAFR-032)).